We begin with the raw amino-acid sequence, 493 residues long: Glutamyl-tRNA(Gln) amidotransferase subunit A (493 aa).

Residues lysine 79 and serine 159 each act as charge relay system in the active site. Residue serine 183 is the Acyl-ester intermediate of the active site.

The protein belongs to the amidase family. GatA subfamily. Heterotrimer of A, B and C subunits.

The catalysed reaction is L-glutamyl-tRNA(Gln) + L-glutamine + ATP + H2O = L-glutaminyl-tRNA(Gln) + L-glutamate + ADP + phosphate + H(+). Its function is as follows. Allows the formation of correctly charged Gln-tRNA(Gln) through the transamidation of misacylated Glu-tRNA(Gln) in organisms which lack glutaminyl-tRNA synthetase. The reaction takes place in the presence of glutamine and ATP through an activated gamma-phospho-Glu-tRNA(Gln). This Sinorhizobium medicae (strain WSM419) (Ensifer medicae) protein is Glutamyl-tRNA(Gln) amidotransferase subunit A.